The following is a 308-amino-acid chain: HTH-type transcriptional regulator SsuR (308 aa).

One can recognise an HTH lysR-type domain in the interval 1-59 (MNFQQLRFVREAVRQNMNLTEVANVLYTSQSGVSKQIKDLEDELGVDIFIRRGKRLTGL). The H-T-H motif DNA-binding region spans 19-38 (LTEVANVLYTSQSGVSKQIK).

It belongs to the LysR transcriptional regulatory family.

Transcriptional regulator that is essential for the utilization of a number of organic sulfur sources of either environmental or human origin. Required for aliphatic sulfonate utilization. Binds to DNA at target promoter regions. Targets include the ssuDBC operon, the tauABC operon, three tauD-type genes and atsA. This is HTH-type transcriptional regulator SsuR from Burkholderia cenocepacia (strain ATCC BAA-245 / DSM 16553 / LMG 16656 / NCTC 13227 / J2315 / CF5610) (Burkholderia cepacia (strain J2315)).